We begin with the raw amino-acid sequence, 222 residues long: Voltage-dependent calcium channel gamma-1 subunit (222 aa).

Residues 1 to 10 (MSQTKMLKVR) lie on the Cytoplasmic side of the membrane. Residues 11 to 29 (VTLFCILAGIVLAMTAVVT) form a helical membrane-spanning segment. Topologically, residues 30-108 (DHWAVLSPHM…TQKEYSISAA (79 aa)) are extracellular. N-linked (GlcNAc...) asparagine glycans are attached at residues Asn43 and Asn79. Cys57 and Cys80 form a disulfide bridge. The helical transmembrane segment at 109-129 (AIAIFSLGFIILGSLCVLLSL) threads the bilayer. The Cytoplasmic segment spans residues 130-134 (GKKRD). A helical transmembrane segment spans residues 135–155 (YLLRPASMFYAFAGLCILVSV). Residues 156-179 (EVMRQSVKRMIDSEDTVWIEYYYS) lie on the Extracellular side of the membrane. A helical membrane pass occupies residues 180–204 (WSFACACAAFILLFLGGLALLLFSL). The Cytoplasmic portion of the chain corresponds to 205–222 (PRMPRNPWESCMDAEPEH).

The protein belongs to the PMP-22/EMP/MP20 family. CACNG subfamily. Component of a calcium channel complex consisting of a pore-forming alpha subunit (CACNA1S) and the ancillary subunits CACNB1 or CACNB2, CACNG1 and CACNA2D1. The channel complex contains alpha, beta, gamma and delta subunits in a 1:1:1:1 ratio, i.e. it contains either CACNB1 or CACNB2. In terms of processing, N-glycosylated. In terms of tissue distribution, skeletal muscle.

It localises to the cell membrane. Its subcellular location is the sarcolemma. In terms of biological role, regulatory subunit of the voltage-gated calcium channel that gives rise to L-type calcium currents in skeletal muscle. Regulates channel inactivation kinetics. The chain is Voltage-dependent calcium channel gamma-1 subunit (CACNG1) from Homo sapiens (Human).